The primary structure comprises 165 residues: MPPKFDPNEVKYLYLRAVGGEVGASAALAPKIGPLGLSPKKVGEDIAKATKEFKGIKVTVQLKIQNRQAAASVVPSASSLVITALKEPPRDRKKDKNVKHSGNIQLDEIIEIARQMRDKSFGRTLASVTKEILGTAQSVGCRVDFKNPHDIIEGINAGEIEIPEN.

N,N-dimethylproline; by NTM1 is present on proline 2. N6,N6,N6-trimethyllysine; by RKM2 is present on residues lysine 4 and lysine 11. A phosphoserine mark is found at serine 25 and serine 38. The residue at position 67 (arginine 67) is an N5-methylarginine; by RMT2. Residues lysine 130 and lysine 146 each participate in a glycyl lysine isopeptide (Lys-Gly) (interchain with G-Cter in ubiquitin) cross-link.

The protein belongs to the universal ribosomal protein uL11 family. As to quaternary structure, component of the large ribosomal subunit (LSU). Mature yeast ribosomes consist of a small (40S) and a large (60S) subunit. The 40S small subunit contains 1 molecule of ribosomal RNA (18S rRNA) and 33 different proteins (encoded by 57 genes). The large 60S subunit contains 3 rRNA molecules (25S, 5.8S and 5S rRNA) and 46 different proteins (encoded by 81 genes). Post-translationally, it appears that the main modified species for L12 contains 6 methyl groups, 2 on Pro-2, 3 on Lys-4 and 1 on Arg-67. Although not reproduced with a second method, methylation at Lys-11 cannot be ruled out.

It localises to the cytoplasm. Its function is as follows. Component of the ribosome, a large ribonucleoprotein complex responsible for the synthesis of proteins in the cell. The small ribosomal subunit (SSU) binds messenger RNAs (mRNAs) and translates the encoded message by selecting cognate aminoacyl-transfer RNA (tRNA) molecules. The large subunit (LSU) contains the ribosomal catalytic site termed the peptidyl transferase center (PTC), which catalyzes the formation of peptide bonds, thereby polymerizing the amino acids delivered by tRNAs into a polypeptide chain. The nascent polypeptides leave the ribosome through a tunnel in the LSU and interact with protein factors that function in enzymatic processing, targeting, and the membrane insertion of nascent chains at the exit of the ribosomal tunnel. This Saccharomyces cerevisiae (strain ATCC 204508 / S288c) (Baker's yeast) protein is Large ribosomal subunit protein uL11A.